A 637-amino-acid chain; its full sequence is 1-deoxy-D-xylulose-5-phosphate synthase (637 aa).

Residues histidine 76 and 117-119 each bind thiamine diphosphate; that span reads GHS. Aspartate 148 is a binding site for Mg(2+). Thiamine diphosphate-binding positions include 149–150, asparagine 177, tyrosine 294, and glutamate 381; that span reads GA. Asparagine 177 serves as a coordination point for Mg(2+).

This sequence belongs to the transketolase family. DXPS subfamily. As to quaternary structure, homodimer. Requires Mg(2+) as cofactor. Thiamine diphosphate is required as a cofactor.

The enzyme catalyses D-glyceraldehyde 3-phosphate + pyruvate + H(+) = 1-deoxy-D-xylulose 5-phosphate + CO2. The protein operates within metabolic intermediate biosynthesis; 1-deoxy-D-xylulose 5-phosphate biosynthesis; 1-deoxy-D-xylulose 5-phosphate from D-glyceraldehyde 3-phosphate and pyruvate: step 1/1. Functionally, catalyzes the acyloin condensation reaction between C atoms 2 and 3 of pyruvate and glyceraldehyde 3-phosphate to yield 1-deoxy-D-xylulose-5-phosphate (DXP). This chain is 1-deoxy-D-xylulose-5-phosphate synthase, found in Neisseria meningitidis serogroup C / serotype 2a (strain ATCC 700532 / DSM 15464 / FAM18).